A 390-amino-acid polypeptide reads, in one-letter code: GTPase Obg (390 aa).

In terms of domain architecture, Obg spans 1 to 159; the sequence is MKFVDEASIL…RELLLELMLL (159 aa). Residues 127-147 are disordered; it reads NTRFKSSVNRTPRQKTNGTPG. Polar residues predominate over residues 129-145; it reads RFKSSVNRTPRQKTNGT. The 174-residue stretch at 160–333 folds into the OBG-type G domain; that stretch reads ADVGMLGMPN…LCWDVMTFII (174 aa). GTP contacts are provided by residues 166–173, 191–195, 213–216, 283–286, and 314–316; these read GMPNAGKS, FTTLV, DIPG, NKID, and SAA. Positions 173 and 193 each coordinate Mg(2+).

This sequence belongs to the TRAFAC class OBG-HflX-like GTPase superfamily. OBG GTPase family. Monomer. Mg(2+) serves as cofactor.

The protein localises to the cytoplasm. Its function is as follows. An essential GTPase which binds GTP, GDP and possibly (p)ppGpp with moderate affinity, with high nucleotide exchange rates and a fairly low GTP hydrolysis rate. Plays a role in control of the cell cycle, stress response, ribosome biogenesis and in those bacteria that undergo differentiation, in morphogenesis control. The sequence is that of GTPase Obg from Escherichia fergusonii (strain ATCC 35469 / DSM 13698 / CCUG 18766 / IAM 14443 / JCM 21226 / LMG 7866 / NBRC 102419 / NCTC 12128 / CDC 0568-73).